We begin with the raw amino-acid sequence, 210 residues long: 3-hexulose-6-phosphate synthase 3 (210 aa).

It belongs to the HPS/KGPDC family. HPS subfamily.

The catalysed reaction is D-ribulose 5-phosphate + formaldehyde = D-arabino-hex-3-ulose 6-phosphate. It functions in the pathway one-carbon metabolism; formaldehyde assimilation via RuMP pathway; D-fructose 6-phosphate from D-ribulose 5-phosphate and formaldehyde: step 1/2. Its function is as follows. Catalyzes the condensation of ribulose 5-phosphate with formaldehyde to form 3-hexulose 6-phosphate. This Staphylococcus saprophyticus subsp. saprophyticus (strain ATCC 15305 / DSM 20229 / NCIMB 8711 / NCTC 7292 / S-41) protein is 3-hexulose-6-phosphate synthase 3.